A 398-amino-acid chain; its full sequence is Phosphopentomutase (398 aa).

Residues aspartate 13, aspartate 290, histidine 295, aspartate 331, histidine 332, and histidine 343 each contribute to the Mn(2+) site.

Belongs to the phosphopentomutase family. Mn(2+) serves as cofactor.

Its subcellular location is the cytoplasm. The enzyme catalyses 2-deoxy-alpha-D-ribose 1-phosphate = 2-deoxy-D-ribose 5-phosphate. It catalyses the reaction alpha-D-ribose 1-phosphate = D-ribose 5-phosphate. Its pathway is carbohydrate degradation; 2-deoxy-D-ribose 1-phosphate degradation; D-glyceraldehyde 3-phosphate and acetaldehyde from 2-deoxy-alpha-D-ribose 1-phosphate: step 1/2. Isomerase that catalyzes the conversion of deoxy-ribose 1-phosphate (dRib-1-P) and ribose 1-phosphate (Rib-1-P) to deoxy-ribose 5-phosphate (dRib-5-P) and ribose 5-phosphate (Rib-5-P), respectively. The polypeptide is Phosphopentomutase (Clostridium tetani (strain Massachusetts / E88)).